Reading from the N-terminus, the 510-residue chain is Lysine--tRNA ligase (510 aa).

Positions 420 and 427 each coordinate Mg(2+).

The protein belongs to the class-II aminoacyl-tRNA synthetase family. As to quaternary structure, homodimer. Mg(2+) is required as a cofactor.

It is found in the cytoplasm. It catalyses the reaction tRNA(Lys) + L-lysine + ATP = L-lysyl-tRNA(Lys) + AMP + diphosphate. The sequence is that of Lysine--tRNA ligase from Psychrobacter sp. (strain PRwf-1).